Consider the following 120-residue polypeptide: Large ribosomal subunit protein bL12 (120 aa).

The protein belongs to the bacterial ribosomal protein bL12 family. In terms of assembly, homodimer. Part of the ribosomal stalk of the 50S ribosomal subunit. Forms a multimeric L10(L12)X complex, where L10 forms an elongated spine to which 2 to 4 L12 dimers bind in a sequential fashion. Binds GTP-bound translation factors.

Functionally, forms part of the ribosomal stalk which helps the ribosome interact with GTP-bound translation factors. Is thus essential for accurate translation. This Pseudoalteromonas translucida (strain TAC 125) protein is Large ribosomal subunit protein bL12.